We begin with the raw amino-acid sequence, 325 residues long: Lipoyl synthase (325 aa).

7 residues coordinate [4Fe-4S] cluster: Cys-72, Cys-77, Cys-83, Cys-98, Cys-102, Cys-105, and Ser-312. The region spanning 84–301 (FSSGTATFMI…AEEGMKMGFK (218 aa)) is the Radical SAM core domain.

Belongs to the radical SAM superfamily. Lipoyl synthase family. Requires [4Fe-4S] cluster as cofactor.

Its subcellular location is the cytoplasm. The enzyme catalyses [[Fe-S] cluster scaffold protein carrying a second [4Fe-4S](2+) cluster] + N(6)-octanoyl-L-lysyl-[protein] + 2 oxidized [2Fe-2S]-[ferredoxin] + 2 S-adenosyl-L-methionine + 4 H(+) = [[Fe-S] cluster scaffold protein] + N(6)-[(R)-dihydrolipoyl]-L-lysyl-[protein] + 4 Fe(3+) + 2 hydrogen sulfide + 2 5'-deoxyadenosine + 2 L-methionine + 2 reduced [2Fe-2S]-[ferredoxin]. The protein operates within protein modification; protein lipoylation via endogenous pathway; protein N(6)-(lipoyl)lysine from octanoyl-[acyl-carrier-protein]: step 2/2. In terms of biological role, catalyzes the radical-mediated insertion of two sulfur atoms into the C-6 and C-8 positions of the octanoyl moiety bound to the lipoyl domains of lipoate-dependent enzymes, thereby converting the octanoylated domains into lipoylated derivatives. The sequence is that of Lipoyl synthase from Stutzerimonas stutzeri (strain A1501) (Pseudomonas stutzeri).